The following is a 93-amino-acid chain: YcgL domain-containing protein VIBHAR_01387 (93 aa).

The YcgL domain occupies 1 to 84 (MLCSIYKSSR…PPENLLEKYK (84 aa)).

This is YcgL domain-containing protein VIBHAR_01387 from Vibrio campbellii (strain ATCC BAA-1116).